The primary structure comprises 143 residues: Dehydrin DHN2 (143 aa).

The segment covering 1–10 (MEYQGQTGHA) has biased composition (polar residues). The segment at 1 to 143 (MEYQGQTGHA…IKEKLPGGQH (143 aa)) is disordered. A compositionally biased stretch (gly residues) spans 24 to 34 (GHGGATGGPTG). Residues 35–46 (THGAAAAAAGTG) are compositionally biased toward low complexity. Residues 51-61 (TRDDHKTDGVL) show a composition bias toward basic and acidic residues. Positions 62 to 71 (RRSGSSSSSS) are enriched in low complexity. A compositionally biased stretch (basic and acidic residues) spans 86–101 (KEKIKEKLPGGAHKDA). The segment covering 109-123 (AAGEYAGTGTHGAEA) has biased composition (low complexity). Residues 124–143 (TGEKKGVMDKIKEKLPGGQH) show a composition bias toward basic and acidic residues.

The protein belongs to the plant dehydrin family.

The polypeptide is Dehydrin DHN2 (DHN2) (Hordeum vulgare (Barley)).